Here is a 492-residue protein sequence, read N- to C-terminus: Aspartyl/glutamyl-tRNA(Asn/Gln) amidotransferase subunit B (492 aa).

It belongs to the GatB/GatE family. GatB subfamily. Heterotrimer of A, B and C subunits.

It catalyses the reaction L-glutamyl-tRNA(Gln) + L-glutamine + ATP + H2O = L-glutaminyl-tRNA(Gln) + L-glutamate + ADP + phosphate + H(+). The catalysed reaction is L-aspartyl-tRNA(Asn) + L-glutamine + ATP + H2O = L-asparaginyl-tRNA(Asn) + L-glutamate + ADP + phosphate + 2 H(+). In terms of biological role, allows the formation of correctly charged Asn-tRNA(Asn) or Gln-tRNA(Gln) through the transamidation of misacylated Asp-tRNA(Asn) or Glu-tRNA(Gln) in organisms which lack either or both of asparaginyl-tRNA or glutaminyl-tRNA synthetases. The reaction takes place in the presence of glutamine and ATP through an activated phospho-Asp-tRNA(Asn) or phospho-Glu-tRNA(Gln). The polypeptide is Aspartyl/glutamyl-tRNA(Asn/Gln) amidotransferase subunit B (Prochlorococcus marinus (strain SARG / CCMP1375 / SS120)).